Consider the following 117-residue polypeptide: Large ribosomal subunit protein bL20 (117 aa).

The protein belongs to the bacterial ribosomal protein bL20 family.

Its function is as follows. Binds directly to 23S ribosomal RNA and is necessary for the in vitro assembly process of the 50S ribosomal subunit. It is not involved in the protein synthesizing functions of that subunit. In Maridesulfovibrio salexigens (strain ATCC 14822 / DSM 2638 / NCIMB 8403 / VKM B-1763) (Desulfovibrio salexigens), this protein is Large ribosomal subunit protein bL20.